Here is a 2269-residue protein sequence, read N- to C-terminus: Neuron navigator 3 (2269 aa).

The Calponin-homology (CH) domain occupies Ser-55 to Gln-162. A compositionally biased stretch (polar residues) spans Thr-186 to Tyr-207. Disordered regions lie at residues Thr-186–Leu-358 and Ser-388–Ser-532. Residues Gly-236–Ser-252 show a composition bias toward low complexity. 2 stretches are compositionally biased toward polar residues: residues Ala-267–Ala-291 and Ser-305–Leu-319. The span at Pro-323–Pro-333 shows a compositional bias: pro residues. The span at Ala-346–Ser-356 shows a compositional bias: polar residues. Residues Pro-411 to Ser-432 show a composition bias toward low complexity. Residues Thr-505 to Pro-518 are compositionally biased toward polar residues. Residues Glu-644–Gln-672 adopt a coiled-coil conformation. Disordered stretches follow at residues Gly-692–Val-737, Ala-756–Glu-776, Val-836–Pro-1036, Ser-1050–Asp-1079, Val-1097–Cys-1412, and Gly-1461–Val-1487. Composition is skewed to polar residues over residues Ser-699–Arg-716 and Pro-727–Val-737. Low complexity predominate over residues Asp-847–Asp-860. Polar residues predominate over residues Gly-874 to Asn-886. A compositionally biased stretch (low complexity) spans Pro-919 to Cys-932. The span at Gln-939–Ser-950 shows a compositional bias: polar residues. The segment covering Gly-977–Lys-989 has biased composition (basic and acidic residues). Residues Ser-1110–Lys-1137 show a composition bias toward low complexity. Polar residues predominate over residues Gly-1163 to Gln-1172. Low complexity-rich tracts occupy residues Gly-1185–Gly-1202 and Gly-1223–Gly-1234. Residues Gly-1266 to Gly-1276 are compositionally biased toward gly residues. Low complexity predominate over residues Ser-1292–Ser-1305. Polar residues-rich tracts occupy residues Asn-1313–Ser-1339 and Arg-1354–Ser-1363. The segment covering Thr-1381–Arg-1391 has biased composition (basic and acidic residues). The segment covering Ser-1392–Cys-1412 has biased composition (polar residues). Residues Ser-1499–Ala-1586 adopt a coiled-coil conformation. Disordered stretches follow at residues Gln-1602–Pro-1672, Asn-1756–Ser-1792, and Gly-2207–Leu-2269. 2 stretches are compositionally biased toward low complexity: residues Ser-1605–Ala-1623 and Thr-1765–Ser-1792. A coiled-coil region spans residues Cys-1697–Thr-1765. The span at Tyr-2208–Asp-2224 shows a compositional bias: polar residues.

It belongs to the Nav/unc-53 family. Interacts with F-actin.

The protein resides in the nucleus outer membrane. The protein localises to the golgi apparatus. It localises to the cell projection. Its subcellular location is the lamellipodium. It is found in the filopodium. In terms of biological role, involved in liver and heart organogenesis during embryo development. Plays a role in the migration of hepatoblasts from the intestinal endoderm during liver organogenesis; possibly by modulating actin polymerization during hepatoblast outgrowth. May be involved in neuron regeneration. This Danio rerio (Zebrafish) protein is Neuron navigator 3 (nav3).